The following is a 458-amino-acid chain: Selection and upkeep of intraepithelial T-cells protein 3 (458 aa).

An N-terminal signal peptide occupies residues 1–24; it reads MGSIQIIFAAYCVVLCVLQMLVLS. The Extracellular segment spans residues 25–237; it reads SEQFTITGLE…ESISIVLTGD (213 aa). Residues 26-141 form the Ig-like V-type domain; it reads EQFTITGLER…EEHITEVKVT (116 aa). Disulfide bonds link Cys49–Cys123 and Cys163–Cys217. The 90-residue stretch at 142–231 folds into the Ig-like C1-type domain; it reads ATSSDIKIIM…LLTHQEESIS (90 aa). A glycan (N-linked (GlcNAc...) asparagine) is linked at Asn200. A helical membrane pass occupies residues 238–258; that stretch reads LFSWKIDWILILSIIACVMIP. At 259–283 the chain is on the cytoplasmic side; the sequence is YSMTSYLQQHLIHGSCSQRSHHWRK. Residues 284 to 304 form a helical membrane-spanning segment; it reads NAMVCMSSVIAIIGSMLILHL. At 305–324 the chain is on the extracellular side; it reads KQRVPISDQHFELDTLYLED. A helical membrane pass occupies residues 325–345; sequence ISVILCVVIVFNLKLNLLTYY. The Cytoplasmic portion of the chain corresponds to 346 to 359; that stretch reads RLERKYDGCTPGCK. A helical membrane pass occupies residues 360–380; it reads ACFYILKIIIIILPFVFTFGC. Residues 381–414 lie on the Extracellular side of the membrane; that stretch reads YNAIFLKYHQLQKKVSIPDPLYYFYTSWLVNMEM. A helical membrane pass occupies residues 415-435; it reads LGVFLVFFPTFINLIEFSQFI. Topologically, residues 436–458 are cytoplasmic; that stretch reads KTVPKPIWLCQENMREDDAIRHR.

This sequence belongs to the SKINT family. In terms of tissue distribution, expressed in skin and thymus.

It localises to the membrane. Its function is as follows. May act by engaging a cell surface molecule on immature T-cells in the embryonic thymus. This Mus musculus (Mouse) protein is Selection and upkeep of intraepithelial T-cells protein 3 (Skint3).